A 141-amino-acid chain; its full sequence is Nucleoside diphosphate kinase (141 aa).

Residues lysine 9, phenylalanine 57, arginine 85, threonine 91, arginine 102, and asparagine 112 each coordinate ATP. Histidine 115 (pros-phosphohistidine intermediate) is an active-site residue.

This sequence belongs to the NDK family. In terms of assembly, homotetramer. Requires Mg(2+) as cofactor.

The protein localises to the cytoplasm. It catalyses the reaction a 2'-deoxyribonucleoside 5'-diphosphate + ATP = a 2'-deoxyribonucleoside 5'-triphosphate + ADP. The enzyme catalyses a ribonucleoside 5'-diphosphate + ATP = a ribonucleoside 5'-triphosphate + ADP. Major role in the synthesis of nucleoside triphosphates other than ATP. The ATP gamma phosphate is transferred to the NDP beta phosphate via a ping-pong mechanism, using a phosphorylated active-site intermediate. This is Nucleoside diphosphate kinase from Chlamydia trachomatis serovar D (strain ATCC VR-885 / DSM 19411 / UW-3/Cx).